A 136-amino-acid polypeptide reads, in one-letter code: Probable disulfide formation protein (136 aa).

A helical transmembrane segment spans residues 7–26 (SYALYFAWAISCAGTLISIF). Residues C36 and C39 are joined by a disulfide bond. 2 helical membrane-spanning segments follow: residues 41–60 (YQRICLFPLTVILGISAYRE) and 67–84 (YILPQAVLGLGISIYQVF). C96 and C101 are oxidised to a cystine. The helical transmembrane segment at 109–131 (SYVTIPMASVVAFGAIVCLLVLT) threads the bilayer.

It belongs to the DsbB family. BdbC subfamily.

Its subcellular location is the cell inner membrane. Functionally, required for disulfide bond formation in some proteins. This chain is Probable disulfide formation protein, found in Chlamydia pneumoniae (Chlamydophila pneumoniae).